Reading from the N-terminus, the 495-residue chain is GTPase Der (495 aa).

EngA-type G domains lie at 3 to 166 (PVVA…VQDE) and 208 to 381 (IKLA…SCAT). Residues 9-16 (GRPNVGKS), 56-60 (DTGGI), 118-121 (NKTD), 214-221 (GRPNVGKS), 261-265 (DTAGV), and 326-329 (NKWD) contribute to the GTP site. Positions 382-466 (RRVSTAMLTR…PIRIQFKEGE (85 aa)) constitute a KH-like domain.

Belongs to the TRAFAC class TrmE-Era-EngA-EngB-Septin-like GTPase superfamily. EngA (Der) GTPase family. As to quaternary structure, associates with the 50S ribosomal subunit.

GTPase that plays an essential role in the late steps of ribosome biogenesis. The chain is GTPase Der from Pectobacterium atrosepticum (strain SCRI 1043 / ATCC BAA-672) (Erwinia carotovora subsp. atroseptica).